Reading from the N-terminus, the 307-residue chain is Ribosomal RNA small subunit methyltransferase H (307 aa).

S-adenosyl-L-methionine is bound by residues 33 to 35, D52, L83, D97, and Q104; that span reads AGH.

It belongs to the methyltransferase superfamily. RsmH family.

The protein localises to the cytoplasm. It catalyses the reaction cytidine(1402) in 16S rRNA + S-adenosyl-L-methionine = N(4)-methylcytidine(1402) in 16S rRNA + S-adenosyl-L-homocysteine + H(+). Its function is as follows. Specifically methylates the N4 position of cytidine in position 1402 (C1402) of 16S rRNA. The protein is Ribosomal RNA small subunit methyltransferase H of Sulfurovum sp. (strain NBC37-1).